The chain runs to 234 residues: Chalcone--flavanone isomerase 2 (234 aa).

Residues T50, N115, and S192 each contribute to the substrate site.

The protein belongs to the chalcone isomerase family.

It carries out the reaction a chalcone = a flavanone.. It functions in the pathway secondary metabolite biosynthesis; flavonoid biosynthesis. Its function is as follows. Catalyzes the intramolecular cyclization of bicyclic chalcones into tricyclic (S)-flavanones. Responsible for the isomerization of 4,2',4',6'-tetrahydroxychalcone (also termed chalcone) into naringenin. This is Chalcone--flavanone isomerase 2 (CHI2) from Vitis vinifera (Grape).